The following is an 83-amino-acid chain: Bublin coiled-coil protein (83 aa).

The segment at 1–25 is disordered; the sequence is MSGPNGDLGTPVEAGAEGEEDGFGE. Positions 25–74 form a coiled coil; sequence EAEYAAINSMLDQINSCLDHLEEKNDHLHARLQELLESNRQTRLEFQQQL. At Ser82 the chain carries Phosphoserine.

The protein belongs to the UPF0184 (EST00098) family.

It is found in the cell junction. The protein resides in the cytoplasm. The protein localises to the cytoskeleton. Its function is as follows. Essential for intermediate filament organization in intestinal cells, interacts with intermediate filament and regulates intestinal lumen morphology. This chain is Bublin coiled-coil protein (BBLN), found in Bos taurus (Bovine).